The sequence spans 232 residues: MTRPQAILTDIEGTTSSISFVKDVLFPYARRAMPAYVREHGGHPQVRHWLNQVADEIGEDVPDEVLITTLQTWIDEDRKHTALKALQGMIWEDGYRTADFSAHIYTDAAIQLQAWHAEGIPLYVYSSGSVPAQKLFFAHSDAGDLSGLVSDWFDTEVGPKRESSSYRRIAERIGVPAPEILFLSDVIEELDAAKRAGMRTALLDRLEDYPTPRSADDVGSHQRVESFTQLVL.

This sequence belongs to the HAD-like hydrolase superfamily. MasA/MtnC family. As to quaternary structure, monomer. Requires Mg(2+) as cofactor.

It carries out the reaction 5-methylsulfanyl-2,3-dioxopentyl phosphate + H2O = 1,2-dihydroxy-5-(methylsulfanyl)pent-1-en-3-one + phosphate. The protein operates within amino-acid biosynthesis; L-methionine biosynthesis via salvage pathway; L-methionine from S-methyl-5-thio-alpha-D-ribose 1-phosphate: step 3/6. Its pathway is amino-acid biosynthesis; L-methionine biosynthesis via salvage pathway; L-methionine from S-methyl-5-thio-alpha-D-ribose 1-phosphate: step 4/6. Bifunctional enzyme that catalyzes the enolization of 2,3-diketo-5-methylthiopentyl-1-phosphate (DK-MTP-1-P) into the intermediate 2-hydroxy-3-keto-5-methylthiopentenyl-1-phosphate (HK-MTPenyl-1-P), which is then dephosphorylated to form the acireductone 1,2-dihydroxy-3-keto-5-methylthiopentene (DHK-MTPene). The polypeptide is Enolase-phosphatase E1 (Xanthomonas campestris pv. campestris (strain 8004)).